Here is a 119-residue protein sequence, read N- to C-terminus: Ribonuclease P protein component (119 aa).

Residues 1 to 24 are disordered; the sequence is MRGSSRFRPHEKLRASDDYQRVKR. Basic and acidic residues predominate over residues 8-21; it reads RPHEKLRASDDYQR.

It belongs to the RnpA family. In terms of assembly, consists of a catalytic RNA component (M1 or rnpB) and a protein subunit.

The catalysed reaction is Endonucleolytic cleavage of RNA, removing 5'-extranucleotides from tRNA precursor.. RNaseP catalyzes the removal of the 5'-leader sequence from pre-tRNA to produce the mature 5'-terminus. It can also cleave other RNA substrates such as 4.5S RNA. The protein component plays an auxiliary but essential role in vivo by binding to the 5'-leader sequence and broadening the substrate specificity of the ribozyme. This Syntrophobacter fumaroxidans (strain DSM 10017 / MPOB) protein is Ribonuclease P protein component.